A 1380-amino-acid polypeptide reads, in one-letter code: Protein TORNADO 1 (1380 aa).

LRR repeat units follow at residues 26–46, 47–70, 105–132, 161–184, 266–289, 299–322, 323–346, 348–371, 446–472, and 476–502; these read FFNL…CQLI, TESS…FIEL, TSKI…ILKR, NDSL…ELSR, NTTV…EFRW, EVKL…LFKN, KSLQ…LLCP, SRFS…GSNT, INPL…IYQK, and NGRK…SVRA. A Roc domain is found at 493–702; sequence PLTEPKSVRA…HHIRMTSKAI (210 aa). GTP contacts are provided by residues 506-513 and 567-571; these read GQNYAGKT and NLAGQ. The helical transmembrane segment at 574–594 threads the bilayer; the sequence is FFALHDLMFPSPCFFLIVLSL. LRR repeat units follow at residues 640–665, 688–712, 799–826, 1023–1046, 1131–1154, and 1229–1254; these read LTHS…RLRD, VSKL…VYQL, LTQL…ELEK, QSQF…TMYD, EAVL…IQGL, and QLGC…NFMK. Residue 641 to 644 coordinates GTP; the sequence is THSE. The region spanning 757-931 is the COR domain; it reads NIQIVETRRH…LQVHLHNRIM (175 aa). Transmembrane regions (helical) follow at residues 1255 to 1275 and 1287 to 1307; these read LVTF…HMIP and PAVM…AALG.

In terms of tissue distribution, expressed in seedlings, roots, leaves, stems and flowers. Present in ovules, prominently in nucellus and integuments.

The protein resides in the membrane. In terms of biological role, involved in the basipetal transport of auxin (IAA) that modulates growth and organs organization. Required for initial divisions in the epidermal/lateral root cap leading to the formation of epidermal cells and a clone of lateral root cap cells, as well as for the maintenance of the radial pattern of cell specification in the root, thus regulating the distinction between the lateral root cap and epidermis. The polypeptide is Protein TORNADO 1 (TRN1) (Arabidopsis thaliana (Mouse-ear cress)).